A 249-amino-acid polypeptide reads, in one-letter code: MVSFDATEALTPYREGRGYGAILFDRERLRQADAGLFSPQRWGDRARPVDEGGRGGAWFVDAPFGHSVLRQYRRGGMAARVSRDQYLWKGAGRTRSFAEFRLMRELLKRKLPVPRPLAACYLREGLGYRAALLMERLENVRSLADHAQVAGRGAPWEDTGRLIARFHRAGLDHADLNAHNILFDAGGHGWLIDFDRGVLRIPATRWRERNLARLHRSLLKLRGNRTREDVDKDYERLHRAYELAWGRGY.

D175 is an active-site residue.

Belongs to the protein kinase superfamily. KdkA/RfaP family.

It is found in the cell inner membrane. It catalyses the reaction an alpha-Kdo-(2-&gt;6)-lipid IVA + ATP = a 4-O-phospho-alpha-Kdo-(2-&gt;6)-lipid IVA + ADP + H(+). Its pathway is bacterial outer membrane biogenesis; LPS core biosynthesis. Catalyzes the ATP-dependent phosphorylation of the 3-deoxy-D-manno-octulosonic acid (Kdo) residue in Kdo-lipid IV(A) at the 4-OH position. The polypeptide is 3-deoxy-D-manno-octulosonic acid kinase (Xanthomonas campestris pv. campestris (strain 8004)).